A 39-amino-acid polypeptide reads, in one-letter code: Photosystem II reaction center protein L (39 aa).

A helical transmembrane segment spans residues 18-38; the sequence is SLYLGLLFVFVTGVLMSSYFF.

Belongs to the PsbL family. In terms of assembly, PSII is composed of 1 copy each of membrane proteins PsbA, PsbB, PsbC, PsbD, PsbE, PsbF, PsbH, PsbI, PsbJ, PsbK, PsbL, PsbM, PsbT, PsbX, PsbY, PsbZ, Psb30/Ycf12, peripheral proteins PsbO, CyanoQ (PsbQ), PsbU, PsbV and a large number of cofactors. It forms dimeric complexes.

It localises to the cellular thylakoid membrane. Functionally, one of the components of the core complex of photosystem II (PSII). PSII is a light-driven water:plastoquinone oxidoreductase that uses light energy to abstract electrons from H(2)O, generating O(2) and a proton gradient subsequently used for ATP formation. It consists of a core antenna complex that captures photons, and an electron transfer chain that converts photonic excitation into a charge separation. This subunit is found at the monomer-monomer interface and is required for correct PSII assembly and/or dimerization. The protein is Photosystem II reaction center protein L of Synechococcus sp. (strain CC9902).